The following is a 116-amino-acid chain: Large ribosomal subunit protein uL18 (116 aa).

It belongs to the universal ribosomal protein uL18 family. As to quaternary structure, part of the 50S ribosomal subunit; part of the 5S rRNA/L5/L18/L25 subcomplex. Contacts the 5S and 23S rRNAs.

Its function is as follows. This is one of the proteins that bind and probably mediate the attachment of the 5S RNA into the large ribosomal subunit, where it forms part of the central protuberance. This Caulobacter vibrioides (strain ATCC 19089 / CIP 103742 / CB 15) (Caulobacter crescentus) protein is Large ribosomal subunit protein uL18.